The primary structure comprises 690 residues: NF-kappa-B-repressing factor (690 aa).

The interval 1–296 (MEKILQMAEG…FKHTFGEDLV (296 aa)) is active repression domain. The Nuclear localization signal motif lies at 25–45 (KPSKGQKRHLSTCDGQNPPKK). Disordered stretches follow at residues 27–87 (SKGQ…NEQT) and 132–163 (MYFD…QTFP). Lysine 68 is covalently cross-linked (Glycyl lysine isopeptide (Lys-Gly) (interchain with G-Cter in SUMO2)). Residues 142–163 (STTSQQANSQSTPEPSPSQTFP) are compositionally biased toward low complexity. A DNA-binding region spans residues 296 to 388 (VVCQIGMSSY…RVFLQDHCLA (93 aa)). Residues 414-431 (PTYPSVKSSQCHTGSSPR) are compositionally biased toward polar residues. The tract at residues 414–437 (PTYPSVKSSQCHTGSSPRGSGKKK) is disordered. Lysine 500 participates in a covalent cross-link: Glycyl lysine isopeptide (Lys-Gly) (interchain with G-Cter in SUMO2). Residues 551 to 596 (EDNIGNQLLRKMGWTGGGLGKSGEGIREPISVKEQHKREGLGLDVE) enclose the G-patch domain. In terms of domain architecture, R3H spans 600 to 664 (KIAKRDIEQI…DRYLVVGRKR (65 aa)). Phosphoserine is present on serine 618. Glycyl lysine isopeptide (Lys-Gly) (interchain with G-Cter in SUMO2) cross-links involve residues lysine 666 and lysine 674.

As to quaternary structure, interacts with NF-kappa-B. Interacts with XRN2. Interacts (via G-patch domain) with DHX15; promoting the RNA helicase activity of DHX15. As to expression, widely and constitutively expressed. Expressed at lower level in colon, peripheral blood lymphocytes, lung and kidney.

It localises to the nucleus. It is found in the nucleolus. Functionally, enhances the ATPase activity of DHX15 by acting like a brace that tethers mobile sections of DHX15 together, stabilizing a functional conformation with high RNA affinity of DHX15. Involved in the constitutive silencing of the interferon beta promoter, independently of the virus-induced signals, and in the inhibition of the basal and cytokine-induced iNOS promoter activity. Also involved in the regulation of IL-8 transcription. May also act as a DNA-binding transcription regulator: interacts with a specific negative regulatory element (NRE) 5'-AATTCCTCTGA-3' to mediate transcriptional repression of certain NK-kappa-B responsive genes. This Homo sapiens (Human) protein is NF-kappa-B-repressing factor.